Reading from the N-terminus, the 615-residue chain is UvrABC system protein C (615 aa).

The region spanning 14–91 is the GIY-YIG domain; the sequence is TSPGCYIHKD…IKENKPKYNI (78 aa). The 36-residue stretch at 196–231 folds into the UVR domain; it reads NKIIDELKGKMAAAAQTMEFERAAEYRDLIQAIGTL.

This sequence belongs to the UvrC family. In terms of assembly, interacts with UvrB in an incision complex.

Its subcellular location is the cytoplasm. Its function is as follows. The UvrABC repair system catalyzes the recognition and processing of DNA lesions. UvrC both incises the 5' and 3' sides of the lesion. The N-terminal half is responsible for the 3' incision and the C-terminal half is responsible for the 5' incision. In Streptococcus pneumoniae (strain JJA), this protein is UvrABC system protein C.